Reading from the N-terminus, the 1451-residue chain is Copper-transporting ATPase 2 (1451 aa).

Topologically, residues 1 to 646 (MPEQERKVTA…KTEIKQWKKS (646 aa)) are cytoplasmic. 3 consecutive HMA domains span residues 57-123 (TTGV…FEAS), 142-208 (AVVK…FEAA), and 256-322 (ATLP…PGYF). C68, C71, C153, C156, C267, and C270 together coordinate Cu(+). Residues 328 to 353 (DGLEKESGSSSVPSLGSSQRQQEPGP) are disordered. Residues 335–345 (GSSSVPSLGSS) are compositionally biased toward low complexity. The 67-residue stretch at 355–421 (RTAVLTITGI…AVEDMGFEVS (67 aa)) folds into the HMA 4 domain. S469, S471, and S474 each carry phosphoserine. 2 HMA domains span residues 481–547 (QKCF…FEAA) and 557–623 (GDIE…FHAS). C492, C495, C568, and C571 together coordinate Cu(+). A helical transmembrane segment spans residues 647-668 (FLCSLVFGIPVMGLMIYMLIPS). Topologically, residues 669–690 (SKPHETMVLDHNIIPGLSVLNL) are extracellular. The chain crosses the membrane as a helical span at residues 691–710 (IFFILCTFVQFLGGWYFYVQ). Residues 711-717 (AYKSLRH) lie on the Cytoplasmic side of the membrane. A helical transmembrane segment spans residues 718–738 (KSANMDVLIVLATTIAYAYSL). Over 739 to 757 (VILVVAIAEKAEKSPVTFF) the chain is Extracellular. A helical transmembrane segment spans residues 758 to 778 (DTPPMLFVFIALGRWLEHVAK). Residues 779–912 (SKTSEALAKL…KAPIQQLADR (134 aa)) are Cytoplasmic-facing. The chain crosses the membrane as a helical span at residues 913–935 (FSGYFVPFIIIISTLTLVVWIII). The Extracellular portion of the chain corresponds to 936–965 (GFVDFGIVQKYFPSPSKHISQTEVIIRFAF). Residues 966–987 (QTSITVLCIACPCSLGLATPTA) form a helical membrane-spanning segment. Residues 988-1310 (VMVGTGVAAQ…LSKRTVRRIR (323 aa)) lie on the Cytoplasmic side of the membrane. The active-site 4-aspartylphosphate intermediate is the D1020. Mg(2+) contacts are provided by D1255 and D1259. A helical transmembrane segment spans residues 1311-1328 (VNLVLALIYNMVGIPIAA). Topologically, residues 1329-1339 (GVFMPIGIVLQ) are extracellular. Residues 1340-1357 (PWMGSAAASSVSVVLSSL) traverse the membrane as a helical segment. Over 1358-1451 (QLKCYRKPDL…LSDRDEEQCI (94 aa)) the chain is Cytoplasmic. Phosphoserine is present on residues S1384 and S1443.

It belongs to the cation transport ATPase (P-type) (TC 3.A.3) family. Type IB subfamily. In terms of assembly, monomer. Interacts with COMMD1/MURR1. Interacts with DCTN4, in a copper-dependent manner. Interacts with ATOX1. Interacts (via C-terminus) with ZBTB16/PLZF. As to expression, expressed in brain, liver, kidney, spleen and stomach. In brain, detected in neuronal cells of the hippocampal formation, olfactory bulbs, cerebellum, cerebral cortex and nuclei in the brainstem. Isoform PINA is expressed during night in adult pineal gland (pinealocytes) and retina. Isoform PINA is not detected in other tissue.

It localises to the golgi apparatus. The protein localises to the trans-Golgi network membrane. Its subcellular location is the late endosome. The enzyme catalyses Cu(+)(in) + ATP + H2O = Cu(+)(out) + ADP + phosphate + H(+). Functionally, copper ion transmembrane transporter involved in the export of copper out of the cells, such as the efflux of hepatic copper into the bile. The protein is Copper-transporting ATPase 2 (Atp7b) of Rattus norvegicus (Rat).